The sequence spans 122 residues: Large ribosomal subunit protein uL14 (122 aa).

Belongs to the universal ribosomal protein uL14 family. In terms of assembly, part of the 50S ribosomal subunit. Forms a cluster with proteins L3 and L19. In the 70S ribosome, L14 and L19 interact and together make contacts with the 16S rRNA in bridges B5 and B8.

Functionally, binds to 23S rRNA. Forms part of two intersubunit bridges in the 70S ribosome. This chain is Large ribosomal subunit protein uL14, found in Xanthomonas axonopodis pv. citri (strain 306).